Reading from the N-terminus, the 122-residue chain is Small ribosomal subunit protein uS13 (122 aa).

The interval 97–122 is disordered; that stretch reads PVRGQRTKTNARTRKGPARTVAGKKK.

Belongs to the universal ribosomal protein uS13 family. In terms of assembly, part of the 30S ribosomal subunit. Forms a loose heterodimer with protein S19. Forms two bridges to the 50S subunit in the 70S ribosome.

Located at the top of the head of the 30S subunit, it contacts several helices of the 16S rRNA. In the 70S ribosome it contacts the 23S rRNA (bridge B1a) and protein L5 of the 50S subunit (bridge B1b), connecting the 2 subunits; these bridges are implicated in subunit movement. Contacts the tRNAs in the A and P-sites. This Geobacter metallireducens (strain ATCC 53774 / DSM 7210 / GS-15) protein is Small ribosomal subunit protein uS13.